A 111-amino-acid polypeptide reads, in one-letter code: BET1-like protein (111 aa).

At 1–86 (MADWARAQSP…MARSGQDNRK (86 aa)) the chain is on the cytoplasmic side. Phosphoserine is present on residues S9 and S37. A t-SNARE coiled-coil homology domain is found at 15–77 (EILDRENKRM…TGSVKRFSTM (63 aa)). Residues 87 to 107 (LLCGMAVGLIVAFFILSYFLS) form a helical; Anchor for type IV membrane protein membrane-spanning segment. At 108-111 (RART) the chain is on the lumenal side.

Component of a SNARE complex consisting of STX5, YKT6, GOSR1 and BET1L. Interacts with STX5.

Its subcellular location is the golgi apparatus membrane. It is found in the golgi apparatus. It localises to the trans-Golgi network membrane. Vesicle SNARE required for targeting and fusion of retrograde transport vesicles with the Golgi complex. Required for the integrity of the Golgi complex. The chain is BET1-like protein from Homo sapiens (Human).